The primary structure comprises 815 residues: Translation initiation factor IF-2 (815 aa).

The tr-type G domain maps to 315–482 (ARPPVVTIMG…AISLTAEVLE (168 aa)). The G1 stretch occupies residues 324-331 (GHVDHGKT). Position 324-331 (324-331 (GHVDHGKT)) interacts with GTP. The segment at 349-353 (GITQH) is G2. The segment at 370–373 (DTPG) is G3. Residues 370–374 (DTPGH) and 424–427 (NKID) each bind GTP. The interval 424–427 (NKID) is G4. The interval 460–462 (SAY) is G5.

Belongs to the TRAFAC class translation factor GTPase superfamily. Classic translation factor GTPase family. IF-2 subfamily.

The protein resides in the cytoplasm. Functionally, one of the essential components for the initiation of protein synthesis. Protects formylmethionyl-tRNA from spontaneous hydrolysis and promotes its binding to the 30S ribosomal subunits. Also involved in the hydrolysis of GTP during the formation of the 70S ribosomal complex. This Ruthia magnifica subsp. Calyptogena magnifica protein is Translation initiation factor IF-2.